A 247-amino-acid chain; its full sequence is Carboxy-S-adenosyl-L-methionine synthase (247 aa).

S-adenosyl-L-methionine is bound by residues tyrosine 40, 65–67 (GAS), 90–91 (DN), 122–123 (DI), asparagine 137, and arginine 204.

The protein belongs to the class I-like SAM-binding methyltransferase superfamily. Cx-SAM synthase family. Homodimer.

It catalyses the reaction prephenate + S-adenosyl-L-methionine = carboxy-S-adenosyl-L-methionine + 3-phenylpyruvate + H2O. Functionally, catalyzes the conversion of S-adenosyl-L-methionine (SAM) to carboxy-S-adenosyl-L-methionine (Cx-SAM). The chain is Carboxy-S-adenosyl-L-methionine synthase from Pseudomonas putida (strain ATCC 700007 / DSM 6899 / JCM 31910 / BCRC 17059 / LMG 24140 / F1).